The chain runs to 191 residues: MLRIPRSLKSIINTINGESGTRYIVRGLIDGSLSALGVVIGASGSADASVIIAAGLGGGIANGLSNILGAFTAEKASLERERIQKEKSLLKKNGYLKKSIIYKKAIRETMICGLIDGISTTIGSALPVVPFFLFDIKTALYVAIGITIAILFILGVFIGKISKENVIISGIKMVAGALAVAILCFMIEKAF.

5 helical membrane-spanning segments follow: residues 24 to 44 (IVRG…GASG), 51 to 71 (IIAA…LGAF), 114 to 134 (LIDG…FFLF), 139 to 159 (ALYV…VFIG), and 167 to 187 (IISG…CFMI).

Its subcellular location is the cell membrane. This is an uncharacterized protein from Methanocaldococcus jannaschii (strain ATCC 43067 / DSM 2661 / JAL-1 / JCM 10045 / NBRC 100440) (Methanococcus jannaschii).